The primary structure comprises 361 residues: Histidinol-phosphate aminotransferase (361 aa).

Lys-219 carries the N6-(pyridoxal phosphate)lysine modification.

Belongs to the class-II pyridoxal-phosphate-dependent aminotransferase family. Histidinol-phosphate aminotransferase subfamily. As to quaternary structure, homodimer. Pyridoxal 5'-phosphate serves as cofactor.

It carries out the reaction L-histidinol phosphate + 2-oxoglutarate = 3-(imidazol-4-yl)-2-oxopropyl phosphate + L-glutamate. The protein operates within amino-acid biosynthesis; L-histidine biosynthesis; L-histidine from 5-phospho-alpha-D-ribose 1-diphosphate: step 7/9. The polypeptide is Histidinol-phosphate aminotransferase (Acinetobacter baylyi (strain ATCC 33305 / BD413 / ADP1)).